The sequence spans 446 residues: MQNLTDKGAIIFGVQKTSQFANGETATADWVDYHSPFNPRGDGYQDPATSSAGAGSSIASYEWLDLAAGSDTGGSIRGPAAVQGIFGNRPSHGLISLDNAMPLSPKLDTPGFLARDPYLWNAANAALYRENPLSRWSWGDSQPSSILSRNKTLFMNWFNENILPRSSDPLTCSSGLLLHVDGSAGFISRNGYINPPVPPFGFSNGQISVFAETPDSVFPLGQVPAFSSITNHTEYLPVTINVVAAKGCDVLIAKLAEDMVAAGILKVLKIGAGIEGGEILMRRYFVRDDGDEVMSRITSRGRLLFQDWDRLRGILAPTLYVDYTKIGKGKWEAMSADDFMAMVSNDDFLGDLCVKTQHLIGATSWERVSESKVVGHHQLRAAHQVYTSPDLKTVKLRGHSHATNEHYYVKSDGVWKFAGLKPEVRWNEHKFEEVFKGSYTQSEKHS.

Y323 serves as a coordination point for substrate. Active-site residues include H358 and H383. Residue N404 participates in substrate binding.

This sequence belongs to the scytalone dehydratase family. Homotrimer. Each subunit contains an active site, located in the central part of the hydrophobic core of the monomer, which functions independently.

Its function is as follows. Scytalone dehydratase-like protein; part of the Pks2 gene cluster that mediates the formation of infectious structures (appressoria), enabling these fungi to kill insects faster. The product of the Pks2 gene cluster is different from the one of Pks1 and has still not been identified. The polypeptide is Scytalone dehydratase-like protein Arp1 (Metarhizium acridum (strain CQMa 102)).